A 118-amino-acid polypeptide reads, in one-letter code: RNA guanine-N7 methyltransferase activating subunit (118 aa).

The residue at position 2 (threonine 2) is an N-acetylthreonine. An interaction with RNMT region spans residues 2 to 55 (TDTAEAVPNFEEMFASRFTENDKEYQEYLKRPPESPPIVEEWNSRAGGNQRNRG). Positions 30 to 118 (LKRPPESPPI…YNQRPPYGYY (89 aa)) are disordered. Position 36 is a phosphoserine (serine 36). Residues 36–42 (SPPIVEE) carry the RNMT-activating domain motif. Low complexity predominate over residues 45–56 (SRAGGNQRNRGN). The tract at residues 56 to 118 (NRLQDNRQFR…YNQRPPYGYY (63 aa)) is RNA-binding. A compositionally biased stretch (basic and acidic residues) spans 57–70 (RLQDNRQFRGRDNR). Positions 76–93 (DNRSNQWHGRSWGNNYPQ) are enriched in polar residues. Arginine 85 is modified (omega-N-methylarginine). A Phosphoserine modification is found at serine 86. Residues 98 to 109 (PYYPQQYGHYGY) show a composition bias toward low complexity.

It belongs to the RAM family. As to quaternary structure, interacts with RNMT; this interaction enhances mRNA binding and cap methyltransferase activity.

It localises to the nucleus. Functionally, regulatory subunit of the mRNA-capping methyltransferase RNMT:RAMAC complex that methylates the N7 position of the added guanosine to the 5'-cap structure of mRNAs. Promotes the recruitment of the methyl donor, S-adenosyl-L-methionine, to RNMT. Regulates RNMT expression by a post-transcriptional stabilizing mechanism. Binds RNA. The sequence is that of RNA guanine-N7 methyltransferase activating subunit (RAMAC) from Pongo abelii (Sumatran orangutan).